A 601-amino-acid chain; its full sequence is Elongation factor 4 (601 aa).

The region spanning 7–189 (KNIRNFSIVA…AIVTRLPPPQ (183 aa)) is the tr-type G domain. Residues 19 to 24 (DHGKST) and 136 to 139 (NKID) each bind GTP.

This sequence belongs to the TRAFAC class translation factor GTPase superfamily. Classic translation factor GTPase family. LepA subfamily.

The protein localises to the cell inner membrane. The enzyme catalyses GTP + H2O = GDP + phosphate + H(+). In terms of biological role, required for accurate and efficient protein synthesis under certain stress conditions. May act as a fidelity factor of the translation reaction, by catalyzing a one-codon backward translocation of tRNAs on improperly translocated ribosomes. Back-translocation proceeds from a post-translocation (POST) complex to a pre-translocation (PRE) complex, thus giving elongation factor G a second chance to translocate the tRNAs correctly. Binds to ribosomes in a GTP-dependent manner. The chain is Elongation factor 4 from Methylocella silvestris (strain DSM 15510 / CIP 108128 / LMG 27833 / NCIMB 13906 / BL2).